The following is a 354-amino-acid chain: Type II methylase M.HgiDII (354 aa).

The 342-residue stretch at Gly-3–Leu-344 folds into the SAM-dependent MTase C5-type domain. The active site involves Cys-79.

It belongs to the class I-like SAM-binding methyltransferase superfamily. C5-methyltransferase family.

It catalyses the reaction a 2'-deoxycytidine in DNA + S-adenosyl-L-methionine = a 5-methyl-2'-deoxycytidine in DNA + S-adenosyl-L-homocysteine + H(+). Its function is as follows. A methylase that recognizes the double-stranded sequence 5'-GTCGAC-3', methylates C-? on both strands and protects the DNA from cleavage by the HgiDII endonuclease. The sequence is that of Type II methylase M.HgiDII from Herpetosiphon aurantiacus (Herpetosiphon giganteus).